Consider the following 1383-residue polypeptide: DNA-directed RNA polymerase subunit beta (1383 aa).

The protein belongs to the RNA polymerase beta chain family. As to quaternary structure, the RNAP catalytic core consists of 2 alpha, 1 beta, 1 beta' and 1 omega subunit. When a sigma factor is associated with the core the holoenzyme is formed, which can initiate transcription.

The enzyme catalyses RNA(n) + a ribonucleoside 5'-triphosphate = RNA(n+1) + diphosphate. Functionally, DNA-dependent RNA polymerase catalyzes the transcription of DNA into RNA using the four ribonucleoside triphosphates as substrates. The polypeptide is DNA-directed RNA polymerase subunit beta (Bartonella henselae (strain ATCC 49882 / DSM 28221 / CCUG 30454 / Houston 1) (Rochalimaea henselae)).